The sequence spans 109 residues: Large ribosomal subunit protein uL24 (109 aa).

It belongs to the universal ribosomal protein uL24 family. In terms of assembly, part of the 50S ribosomal subunit.

In terms of biological role, one of two assembly initiator proteins, it binds directly to the 5'-end of the 23S rRNA, where it nucleates assembly of the 50S subunit. One of the proteins that surrounds the polypeptide exit tunnel on the outside of the subunit. In Legionella pneumophila subsp. pneumophila (strain Philadelphia 1 / ATCC 33152 / DSM 7513), this protein is Large ribosomal subunit protein uL24.